The following is a 336-amino-acid chain: MVVKVGINGFGRIGRLAFRRIQNIEGVEVTRINDLTDPNMLAHLLKYDTTQGRFDGTVEVKEGGFEVNGNFIKVSAERDPENIDWATDGVEIVLEATGFFAKKEAAEKHLHANGAKKVVITAPGGNDVKTVVFNTNHDILDGTETVISGASCTTNCLAPMAKALHDAFGIQKGLMTTIHAYTGDQMILDGPHRGGDLRRARAGAANIVPNSTGAAKAIGLVIPELNGKLDGAAQRVPVPTGSVTELVVTLDKNVSVDEINSAMKAASNDSFGYTEDPIVSSDIVGVSYGSLFDATQTKVMEVDGSQLVKVVSWYDNEMSYTAQLVRTLEYFAKIAK.

NAD(+) is bound by residues 12–13 (RI), D34, R78, and T121. D-glyceraldehyde 3-phosphate-binding positions include 151–153 (SCT), T182, R199, 212–213 (TG), and R235. C152 acts as the Nucleophile in catalysis. Residue N316 coordinates NAD(+).

It belongs to the glyceraldehyde-3-phosphate dehydrogenase family. Homotetramer.

It is found in the cytoplasm. It catalyses the reaction D-glyceraldehyde 3-phosphate + phosphate + NAD(+) = (2R)-3-phospho-glyceroyl phosphate + NADH + H(+). It functions in the pathway carbohydrate degradation; glycolysis; pyruvate from D-glyceraldehyde 3-phosphate: step 1/5. Its function is as follows. Also binds human plasminogen. In terms of biological role, catalyzes the oxidative phosphorylation of glyceraldehyde 3-phosphate (G3P) to 1,3-bisphosphoglycerate (BPG) using the cofactor NAD. The first reaction step involves the formation of a hemiacetal intermediate between G3P and a cysteine residue, and this hemiacetal intermediate is then oxidized to a thioester, with concomitant reduction of NAD to NADH. The reduced NADH is then exchanged with the second NAD, and the thioester is attacked by a nucleophilic inorganic phosphate to produce BPG. In Streptococcus pyogenes, this protein is Glyceraldehyde-3-phosphate dehydrogenase (gap).